The chain runs to 75 residues: MKTIMIAFIRGYQKFISPLTPPSCRFYPTCSQYGIEAVKTHGALKGGWLTLKRILKCHPFHPGGVDPVPDKKQKH.

It belongs to the UPF0161 family.

The protein localises to the cell membrane. Functionally, could be involved in insertion of integral membrane proteins into the membrane. This chain is Putative membrane protein insertion efficiency factor, found in Bacillus velezensis (strain DSM 23117 / BGSC 10A6 / LMG 26770 / FZB42) (Bacillus amyloliquefaciens subsp. plantarum).